We begin with the raw amino-acid sequence, 445 residues long: MSTILKSLPKGENVGIAFSGGLDTSAALLWMKQKGARVFAYTANLGQPDEADYDEIPRKAMEFGAEKARLVDCRSQLVHEGIAAIQSGAFHVSTGGVAYFNTTPLGRAVTGTMLVSAMKEDGVNIWGDGSTYKGNDIERFYRYGLLTNPDLRIYKPWLDQQFIDELGGRAEMSAFMTAHGFAYKMSSEKAYSTDSNLLGATHEAKDLEHLDSGIRIVNPIMGVPFWRDDCAVAAETVSVRFAEGQPVALNGKTFTDPVALFLEANAIGGRHGLGMSDQIENRIIEAKSRGIYEAPAMALLHIAYERLVTGIHNEDTIEQYRISGMRLGRLLYQGRWFDSQALMLRETAQRWVARAITGEVTLELRRGNDYSILNTQSPNLTYAPERLSMEKVEDAPFTPGDRIGQLTMRNLDITDTRAKLDLYAKSGLLSAGEGSHIPKLESDKG.

ATP-binding positions include 17-25 and alanine 43; that span reads AFSGGLDTS. Tyrosine 99 lines the L-citrulline pocket. ATP is bound by residues glycine 129 and threonine 131. Residues threonine 131, asparagine 135, and aspartate 136 each contribute to the L-aspartate site. L-citrulline is bound at residue asparagine 135. Residue aspartate 136 participates in ATP binding. Residues arginine 139 and serine 192 each coordinate L-citrulline. Aspartate 194 contributes to the ATP binding site. L-citrulline contacts are provided by threonine 201, glutamate 203, and glutamate 280.

Belongs to the argininosuccinate synthase family. Type 2 subfamily. Homotetramer.

The protein resides in the cytoplasm. The catalysed reaction is L-citrulline + L-aspartate + ATP = 2-(N(omega)-L-arginino)succinate + AMP + diphosphate + H(+). Its pathway is amino-acid biosynthesis; L-arginine biosynthesis; L-arginine from L-ornithine and carbamoyl phosphate: step 2/3. In Rhodopseudomonas palustris (strain BisB18), this protein is Argininosuccinate synthase.